Reading from the N-terminus, the 196-residue chain is Nucleoside triphosphate pyrophosphatase (196 aa).

Asp-72 functions as the Proton acceptor in the catalytic mechanism.

It belongs to the Maf family. Requires a divalent metal cation as cofactor.

It localises to the cytoplasm. It carries out the reaction a ribonucleoside 5'-triphosphate + H2O = a ribonucleoside 5'-phosphate + diphosphate + H(+). The catalysed reaction is a 2'-deoxyribonucleoside 5'-triphosphate + H2O = a 2'-deoxyribonucleoside 5'-phosphate + diphosphate + H(+). Its function is as follows. Nucleoside triphosphate pyrophosphatase. May have a dual role in cell division arrest and in preventing the incorporation of modified nucleotides into cellular nucleic acids. This is Nucleoside triphosphate pyrophosphatase from Chlamydia muridarum (strain MoPn / Nigg).